The sequence spans 183 residues: Translation initiation factor IF-3 (183 aa).

Over residues 1-13 (MKQPDRNQQQGAK) the composition is skewed to polar residues. The disordered stretch occupies residues 1–24 (MKQPDRNQQQGAKSNRPAINDEIR).

Belongs to the IF-3 family. Monomer.

Its subcellular location is the cytoplasm. Its function is as follows. IF-3 binds to the 30S ribosomal subunit and shifts the equilibrium between 70S ribosomes and their 50S and 30S subunits in favor of the free subunits, thus enhancing the availability of 30S subunits on which protein synthesis initiation begins. This chain is Translation initiation factor IF-3, found in Acinetobacter baylyi (strain ATCC 33305 / BD413 / ADP1).